The following is a 148-amino-acid chain: Large ribosomal subunit protein bL28c (148 aa).

A chloroplast-targeting transit peptide spans methionine 1 to alanine 71.

In terms of assembly, component of the chloroplast large ribosomal subunit (LSU). Mature 70S chloroplast ribosomes of higher plants consist of a small (30S) and a large (50S) subunit. The 30S small subunit contains 1 molecule of ribosomal RNA (16S rRNA) and 24 different proteins. The 50S large subunit contains 3 rRNA molecules (23S, 5S and 4.5S rRNA) and 33 different proteins.

It localises to the plastid. The protein resides in the chloroplast. Functionally, component of the chloroplast ribosome (chloro-ribosome), a dedicated translation machinery responsible for the synthesis of chloroplast genome-encoded proteins, including proteins of the transcription and translation machinery and components of the photosynthetic apparatus. This chain is Large ribosomal subunit protein bL28c (RPL28), found in Spinacia oleracea (Spinach).